A 275-amino-acid chain; its full sequence is uncharacterized protein (275 aa).

This sequence belongs to the SMP-30/CGR1 family.

This is an uncharacterized protein from Sulfolobus acidocaldarius (strain ATCC 33909 / DSM 639 / JCM 8929 / NBRC 15157 / NCIMB 11770).